The following is a 262-amino-acid chain: Adenosylcobinamide-GDP ribazoletransferase (262 aa).

The next 6 helical transmembrane spans lie at 43–63 (YFGL…WLTQ), 66–86 (LPAG…TGGF), 120–140 (GALA…ELAL), 146–166 (AGSA…SLIF), 191–211 (LFIL…IAAL), and 242–262 (AAQQ…GSIL).

This sequence belongs to the CobS family. The cofactor is Mg(2+).

Its subcellular location is the cell inner membrane. It catalyses the reaction alpha-ribazole + adenosylcob(III)inamide-GDP = adenosylcob(III)alamin + GMP + H(+). The enzyme catalyses alpha-ribazole 5'-phosphate + adenosylcob(III)inamide-GDP = adenosylcob(III)alamin 5'-phosphate + GMP + H(+). The protein operates within cofactor biosynthesis; adenosylcobalamin biosynthesis; adenosylcobalamin from cob(II)yrinate a,c-diamide: step 7/7. Functionally, joins adenosylcobinamide-GDP and alpha-ribazole to generate adenosylcobalamin (Ado-cobalamin). Also synthesizes adenosylcobalamin 5'-phosphate from adenosylcobinamide-GDP and alpha-ribazole 5'-phosphate. The chain is Adenosylcobinamide-GDP ribazoletransferase from Shewanella sp. (strain ANA-3).